Consider the following 491-residue polypeptide: Cobyric acid synthase (491 aa).

The 190-residue stretch at 250 to 439 (EVTIAVIRLP…LHGIFDNGAW (190 aa)) folds into the GATase cobBQ-type domain. Cys331 serves as the catalytic Nucleophile. His431 is a catalytic residue.

It belongs to the CobB/CobQ family. CobQ subfamily.

It functions in the pathway cofactor biosynthesis; adenosylcobalamin biosynthesis. Functionally, catalyzes amidations at positions B, D, E, and G on adenosylcobyrinic A,C-diamide. NH(2) groups are provided by glutamine, and one molecule of ATP is hydrogenolyzed for each amidation. This Synechococcus sp. (strain ATCC 27144 / PCC 6301 / SAUG 1402/1) (Anacystis nidulans) protein is Cobyric acid synthase.